Here is a 207-residue protein sequence, read N- to C-terminus: Ribosomal RNA small subunit methyltransferase G (207 aa).

Residues Gly75, Met80, 126–127 (VE), and Arg141 each bind S-adenosyl-L-methionine.

This sequence belongs to the methyltransferase superfamily. RNA methyltransferase RsmG family.

The protein resides in the cytoplasm. It catalyses the reaction guanosine(527) in 16S rRNA + S-adenosyl-L-methionine = N(7)-methylguanosine(527) in 16S rRNA + S-adenosyl-L-homocysteine. Specifically methylates the N7 position of guanine in position 527 of 16S rRNA. This chain is Ribosomal RNA small subunit methyltransferase G, found in Laribacter hongkongensis (strain HLHK9).